Consider the following 330-residue polypeptide: Phosphate acyltransferase (330 aa).

It belongs to the PlsX family. As to quaternary structure, homodimer. Probably interacts with PlsY.

The protein resides in the cytoplasm. It catalyses the reaction a fatty acyl-[ACP] + phosphate = an acyl phosphate + holo-[ACP]. Its pathway is lipid metabolism; phospholipid metabolism. In terms of biological role, catalyzes the reversible formation of acyl-phosphate (acyl-PO(4)) from acyl-[acyl-carrier-protein] (acyl-ACP). This enzyme utilizes acyl-ACP as fatty acyl donor, but not acyl-CoA. The sequence is that of Phosphate acyltransferase from Campylobacter hominis (strain ATCC BAA-381 / DSM 21671 / CCUG 45161 / LMG 19568 / NCTC 13146 / CH001A).